Here is a 352-residue protein sequence, read N- to C-terminus: Holliday junction branch migration complex subunit RuvB (352 aa).

The segment at Thr-5–Tyr-191 is large ATPase domain (RuvB-L). Residues Leu-30, Arg-31, Gly-72, Lys-75, Thr-76, Thr-77, Glu-138–Tyr-140, Arg-181, Tyr-191, and Arg-228 each bind ATP. Thr-76 provides a ligand contact to Mg(2+). The tract at residues Thr-192–Asp-262 is small ATPAse domain (RuvB-S). The interval Pro-265–Gln-352 is head domain (RuvB-H). 3 residues coordinate DNA: Arg-301, Arg-320, and Arg-325.

It belongs to the RuvB family. In terms of assembly, homohexamer. Forms an RuvA(8)-RuvB(12)-Holliday junction (HJ) complex. HJ DNA is sandwiched between 2 RuvA tetramers; dsDNA enters through RuvA and exits via RuvB. An RuvB hexamer assembles on each DNA strand where it exits the tetramer. Each RuvB hexamer is contacted by two RuvA subunits (via domain III) on 2 adjacent RuvB subunits; this complex drives branch migration. In the full resolvosome a probable DNA-RuvA(4)-RuvB(12)-RuvC(2) complex forms which resolves the HJ.

The protein resides in the cytoplasm. It catalyses the reaction ATP + H2O = ADP + phosphate + H(+). In terms of biological role, the RuvA-RuvB-RuvC complex processes Holliday junction (HJ) DNA during genetic recombination and DNA repair, while the RuvA-RuvB complex plays an important role in the rescue of blocked DNA replication forks via replication fork reversal (RFR). RuvA specifically binds to HJ cruciform DNA, conferring on it an open structure. The RuvB hexamer acts as an ATP-dependent pump, pulling dsDNA into and through the RuvAB complex. RuvB forms 2 homohexamers on either side of HJ DNA bound by 1 or 2 RuvA tetramers; 4 subunits per hexamer contact DNA at a time. Coordinated motions by a converter formed by DNA-disengaged RuvB subunits stimulates ATP hydrolysis and nucleotide exchange. Immobilization of the converter enables RuvB to convert the ATP-contained energy into a lever motion, pulling 2 nucleotides of DNA out of the RuvA tetramer per ATP hydrolyzed, thus driving DNA branch migration. The RuvB motors rotate together with the DNA substrate, which together with the progressing nucleotide cycle form the mechanistic basis for DNA recombination by continuous HJ branch migration. Branch migration allows RuvC to scan DNA until it finds its consensus sequence, where it cleaves and resolves cruciform DNA. This Janthinobacterium sp. (strain Marseille) (Minibacterium massiliensis) protein is Holliday junction branch migration complex subunit RuvB.